The primary structure comprises 517 residues: MTKNIHDQRILILDFGSQYTQLVARRVREIGVYCELWSWDVEEADIREFNPDGIILSGGPESVTEDNSPRAPQYVFDSGVPVLGVCYGMQTMAEQLGGKVSTSDEREFGYAAVKVSGESAIFKDLEATQDVWMSHGDKVVEIPAGFTKVGETDTCPYAAMANEEKKYYGVQFHPEVTHTKNGLQMLENFVLGICGCERLWTSESIIEDAVARIKEQVGDDEVILGLSGGVDSSVVAMLVHRAIGDKLTCVFVDNGLLRLNEGQQVMDMFGDKFGLNIIKVDAEERFLKALEGKSDPEEKRKTIGHVFVDVFDEESKKLKNAKWLAQGTIYPDVIESAASKTGKAHVIKSHHNVGGLPDDMEMGLVEPLRELFKDEVRKIGLELGLPYEMLYRHPFPGPGLGVRVLGEIKKEYCDLLRRADAIFIEELHAADLYNKVSQAFTVFLPVRSVGVMGDGRKYDWVVSLRAVETIDFMTAHWAHLPYDFLGKVSNRIINEVNGISRVVYDISGKPPATIEWE.

The region spanning 9–199 is the Glutamine amidotransferase type-1 domain; the sequence is RILILDFGSQ…VLGICGCERL (191 aa). The Nucleophile role is filled by C86. Catalysis depends on residues H173 and E175. One can recognise a GMPS ATP-PPase domain in the interval 200–392; the sequence is WTSESIIEDA…LGLPYEMLYR (193 aa). Residue 227–233 coordinates ATP; it reads SGGVDSS.

As to quaternary structure, homodimer.

It catalyses the reaction XMP + L-glutamine + ATP + H2O = GMP + L-glutamate + AMP + diphosphate + 2 H(+). It participates in purine metabolism; GMP biosynthesis; GMP from XMP (L-Gln route): step 1/1. Its function is as follows. Catalyzes the synthesis of GMP from XMP. This Vibrio vulnificus (strain CMCP6) protein is GMP synthase [glutamine-hydrolyzing].